The chain runs to 333 residues: Phosphate acyltransferase (333 aa).

Belongs to the PlsX family. Homodimer. Probably interacts with PlsY.

It is found in the cytoplasm. It carries out the reaction a fatty acyl-[ACP] + phosphate = an acyl phosphate + holo-[ACP]. The protein operates within lipid metabolism; phospholipid metabolism. Catalyzes the reversible formation of acyl-phosphate (acyl-PO(4)) from acyl-[acyl-carrier-protein] (acyl-ACP). This enzyme utilizes acyl-ACP as fatty acyl donor, but not acyl-CoA. The polypeptide is Phosphate acyltransferase (Lactobacillus johnsonii (strain CNCM I-12250 / La1 / NCC 533)).